The following is a 277-amino-acid chain: Large ribosomal subunit protein uL2 (277 aa).

Composition is skewed to basic residues over residues 210–219 (RARWAGKRPQ) and 259–277 (TRSKKARSNKFIVRSRNKK). The disordered stretch occupies residues 210 to 277 (RARWAGKRPQ…KFIVRSRNKK (68 aa)).

The protein belongs to the universal ribosomal protein uL2 family. Part of the 50S ribosomal subunit. Forms a bridge to the 30S subunit in the 70S ribosome.

Its function is as follows. One of the primary rRNA binding proteins. Required for association of the 30S and 50S subunits to form the 70S ribosome, for tRNA binding and peptide bond formation. It has been suggested to have peptidyltransferase activity; this is somewhat controversial. Makes several contacts with the 16S rRNA in the 70S ribosome. The polypeptide is Large ribosomal subunit protein uL2 (Ligilactobacillus salivarius (strain UCC118) (Lactobacillus salivarius)).